Consider the following 790-residue polypeptide: Vacuolar protein sorting-associated protein 35B (790 aa).

It belongs to the VPS35 family. As to quaternary structure, component of the retromer complex which consists of VPS29 (MAG1), VPS26 (VPS26A or VPS26B), VPS35 (VPS35A or VPS35B or VPS35C), VPS5/17 (SNX1 or SNX2A or SNX2B). Component of a retromer subcomplex consisting of VPS29 (MAG1), VPS26 (VPS26A or VPS26B), VPS35 (VPS35A or VPS35B or VPS35C). Expressed in siliques and maturing seeds (at protein level).

The protein resides in the cytoplasm. It localises to the endosome membrane. It is found in the prevacuolar compartment membrane. The protein localises to the golgi apparatus. Its subcellular location is the trans-Golgi network membrane. Functionally, plays a role in vesicular protein sorting. Component of the membrane-associated retromer complex which is essential in endosome-to-Golgi retrograde transport. Also involved in the efficient sorting of seed storage proteins globulin 12S and albumin 2S. The VPS29-VPS26-VPS35 subcomplex may be involved in recycling of specific cargos from endosome to the plasma membrane. In Arabidopsis thaliana (Mouse-ear cress), this protein is Vacuolar protein sorting-associated protein 35B (VPS35B).